The primary structure comprises 151 residues: Ribosome maturation factor RimP (151 aa).

The protein belongs to the RimP family.

It is found in the cytoplasm. Required for maturation of 30S ribosomal subunits. This Shewanella sp. (strain ANA-3) protein is Ribosome maturation factor RimP.